A 197-amino-acid polypeptide reads, in one-letter code: Adenylate kinase (197 aa).

Residue 16–21 (GAGKGT) participates in ATP binding. The segment at 36–65 (STGDILRDHVARGTALGQRVKPILDAGQLV) is NMP. AMP is bound by residues T37, R42, 63–65 (QLV), 90–93 (GFPR), and Q97. The tract at residues 131–147 (ERGRQAALRGEPVRSDD) is LID. R132 lines the ATP pocket. AMP is bound by residues R144 and R155. Residue G183 participates in ATP binding.

The protein belongs to the adenylate kinase family. In terms of assembly, monomer.

The protein localises to the cytoplasm. The enzyme catalyses AMP + ATP = 2 ADP. The protein operates within purine metabolism; AMP biosynthesis via salvage pathway; AMP from ADP: step 1/1. Its function is as follows. Catalyzes the reversible transfer of the terminal phosphate group between ATP and AMP. Plays an important role in cellular energy homeostasis and in adenine nucleotide metabolism. This Deinococcus geothermalis (strain DSM 11300 / CIP 105573 / AG-3a) protein is Adenylate kinase.